Reading from the N-terminus, the 185-residue chain is Large ribosomal subunit protein uL5 (185 aa).

Belongs to the universal ribosomal protein uL5 family. In terms of assembly, part of the 50S ribosomal subunit; part of the 5S rRNA/L5/L18/L25 subcomplex. Contacts the 5S rRNA and the P site tRNA. Forms a bridge to the 30S subunit in the 70S ribosome.

This is one of the proteins that bind and probably mediate the attachment of the 5S RNA into the large ribosomal subunit, where it forms part of the central protuberance. In the 70S ribosome it contacts protein S13 of the 30S subunit (bridge B1b), connecting the 2 subunits; this bridge is implicated in subunit movement. Contacts the P site tRNA; the 5S rRNA and some of its associated proteins might help stabilize positioning of ribosome-bound tRNAs. The chain is Large ribosomal subunit protein uL5 from Rhizobium leguminosarum bv. trifolii (strain WSM2304).